The chain runs to 405 residues: MKKVIKKIALAYSGGLDTSIMIPWLKEHYEHAEVIAVICDLGQQEDLDAIKNKALKSGASKAYVVDVKNEFATQYLWPLVKSGALYEDQYILGTISRPLIAQKLVEIALTEQVNAVAHGATGKGNDQVRFEYSIKALAPQLEIIAPWRTWDIKSRQEAIVYAKAHGIEVPVTPKAPYSRDHNIWYISHEGGVLEDPSQEMPNDVLLMTAPVSQTPDEEEVVVLDFKKGVPVALNGQELSPVDLLNSLNQKAGQHGIGVADIVENRLVGMKIRGIYEAPAAAVLYKAHKLLESLCLTRSTLHLKQSLQQTYANLVYEGRWFSQTKQALDAFIDVTQQHVTGCVKLKLFKGNIIPAGMHSPYSLHHPELATFEEDNVYNQKDAEGFINLFSLSAKIYSQVHQGGNYD.

Ala11–Ser19 contacts ATP. An L-citrulline-binding site is contributed by Tyr90. Gly119 lines the ATP pocket. L-aspartate-binding residues include Thr121, Asn125, and Asp126. An L-citrulline-binding site is contributed by Asn125. L-citrulline is bound by residues Arg129, Ser178, Ser187, Glu263, and Tyr275.

The protein belongs to the argininosuccinate synthase family. Type 1 subfamily. In terms of assembly, homotetramer.

The protein resides in the cytoplasm. It catalyses the reaction L-citrulline + L-aspartate + ATP = 2-(N(omega)-L-arginino)succinate + AMP + diphosphate + H(+). Its pathway is amino-acid biosynthesis; L-arginine biosynthesis; L-arginine from L-ornithine and carbamoyl phosphate: step 2/3. This chain is Argininosuccinate synthase, found in Legionella pneumophila subsp. pneumophila (strain Philadelphia 1 / ATCC 33152 / DSM 7513).